Here is a 164-residue protein sequence, read N- to C-terminus: Ferredoxin-type protein NapF (164 aa).

4Fe-4S ferredoxin-type domains lie at 28 to 57, 58 to 89, and 132 to 161; these read GDESHFLTHCTRCDACINACENNILQRGAG, GYPSVNFKNNECSFCYACAQACPESLFSPRHT, and YQPQLNSQLCNGCGACAASCPVSAITAEYL. [4Fe-4S] cluster-binding residues include Cys37, Cys40, Cys43, Cys47, Cys69, Cys72, Cys75, Cys79, Cys141, Cys144, Cys147, and Cys151.

Belongs to the NapF family. In terms of assembly, interacts with the cytoplasmic NapA precursor. Requires [4Fe-4S] cluster as cofactor.

The protein localises to the cytoplasm. Its function is as follows. Could be involved in the maturation of NapA, the catalytic subunit of the periplasmic nitrate reductase, before its export into the periplasm. In Escherichia coli O157:H7, this protein is Ferredoxin-type protein NapF.